Reading from the N-terminus, the 409-residue chain is Probable plastid-lipid-associated protein 12, chloroplastic (409 aa).

The transit peptide at 1-55 (MVAVRFYAVEMSLPCLCPCPSSPISLSLCSPRFNLLNTTSRRLGLSRNCRTLRIS) directs the protein to the chloroplast.

The protein belongs to the PAP/fibrillin family.

It is found in the plastid. It localises to the chloroplast thylakoid. The polypeptide is Probable plastid-lipid-associated protein 12, chloroplastic (PAP12) (Arabidopsis thaliana (Mouse-ear cress)).